Here is a 536-residue protein sequence, read N- to C-terminus: 3',5'-cyclic-AMP phosphodiesterase 4C (536 aa).

The disordered stretch occupies residues 49–69 (QALLGTPPQSSQQAAPAEESG). A PDEase domain is found at 178 to 507 (VQTDQEEQLA…EWYQSRVPCS (330 aa)). Residue His-254 is the Proton donor of the active site. His-254 lines the 3',5'-cyclic AMP pocket. The AMP site is built by His-254 and His-258. Zn(2+) contacts are provided by His-258, His-294, Asp-295, and Asp-412. AMP-binding residues include Asp-295, Asp-412, Gln-463, and Phe-466. Mg(2+) is bound at residue Asp-295. Asp-295 serves as a coordination point for Mn(2+). 3',5'-cyclic AMP is bound by residues Gln-463 and Phe-466. Position 507 is a phosphoserine (Ser-507).

The protein belongs to the cyclic nucleotide phosphodiesterase family. PDE4 subfamily. As to quaternary structure, part of a complex containing AKAP5, ADCY5, ADCY6 and PKD2. Zn(2+) serves as cofactor. It depends on Mg(2+) as a cofactor. The cofactor is Mn(2+).

Its subcellular location is the cell projection. It localises to the cilium. It catalyses the reaction 3',5'-cyclic AMP + H2O = AMP + H(+). Its pathway is purine metabolism; 3',5'-cyclic AMP degradation; AMP from 3',5'-cyclic AMP: step 1/1. Its function is as follows. Hydrolyzes the second messenger cAMP, which is a key regulator of many important physiological processes. This chain is 3',5'-cyclic-AMP phosphodiesterase 4C, found in Rattus norvegicus (Rat).